The sequence spans 144 residues: D-aminoacyl-tRNA deacylase (144 aa).

The short motif at 136–137 (GP) is the Gly-cisPro motif, important for rejection of L-amino acids element.

It belongs to the DTD family. In terms of assembly, homodimer.

It localises to the cytoplasm. The catalysed reaction is glycyl-tRNA(Ala) + H2O = tRNA(Ala) + glycine + H(+). The enzyme catalyses a D-aminoacyl-tRNA + H2O = a tRNA + a D-alpha-amino acid + H(+). Its function is as follows. An aminoacyl-tRNA editing enzyme that deacylates mischarged D-aminoacyl-tRNAs. Also deacylates mischarged glycyl-tRNA(Ala), protecting cells against glycine mischarging by AlaRS. Acts via tRNA-based rather than protein-based catalysis; rejects L-amino acids rather than detecting D-amino acids in the active site. By recycling D-aminoacyl-tRNA to D-amino acids and free tRNA molecules, this enzyme counteracts the toxicity associated with the formation of D-aminoacyl-tRNA entities in vivo and helps enforce protein L-homochirality. This chain is D-aminoacyl-tRNA deacylase, found in Mannheimia succiniciproducens (strain KCTC 0769BP / MBEL55E).